A 213-amino-acid polypeptide reads, in one-letter code: 3-isopropylmalate dehydratase small subunit (213 aa).

It belongs to the LeuD family. LeuD type 1 subfamily. As to quaternary structure, heterodimer of LeuC and LeuD.

The enzyme catalyses (2R,3S)-3-isopropylmalate = (2S)-2-isopropylmalate. It participates in amino-acid biosynthesis; L-leucine biosynthesis; L-leucine from 3-methyl-2-oxobutanoate: step 2/4. In terms of biological role, catalyzes the isomerization between 2-isopropylmalate and 3-isopropylmalate, via the formation of 2-isopropylmaleate. The polypeptide is 3-isopropylmalate dehydratase small subunit (Neisseria meningitidis serogroup C / serotype 2a (strain ATCC 700532 / DSM 15464 / FAM18)).